Here is a 110-residue protein sequence, read N- to C-terminus: MLDELKCEACSIDAIALTTQQQQELLLELEGWHLMEREGIPQLEKVYKFKNFMQAWQFSNQVAELAEQEFHHPSILLEWGKVTVTWWSHSIKGLHKNDFICAAKCDQIIR.

This sequence belongs to the pterin-4-alpha-carbinolamine dehydratase family.

The enzyme catalyses (4aS,6R)-4a-hydroxy-L-erythro-5,6,7,8-tetrahydrobiopterin = (6R)-L-erythro-6,7-dihydrobiopterin + H2O. This chain is Putative pterin-4-alpha-carbinolamine dehydratase, found in Vibrio vulnificus (strain CMCP6).